The primary structure comprises 77 residues: Large ribosomal subunit protein bL28 (77 aa).

The protein belongs to the bacterial ribosomal protein bL28 family.

In Paracidovorax citrulli (strain AAC00-1) (Acidovorax citrulli), this protein is Large ribosomal subunit protein bL28.